The sequence spans 213 residues: MSSLAFRTLRNGLGLKSSVRALSTTTTTLSNYQQPDYSSYLNNKSGQGSRNFTYFMVGSMGLLSAAGAKSTVEAFLSSFAASADVLAMAKVEVKLGAIPEGKNVIIKWQGKPVFIRHRTADEIEEANQVDIKTLRDPQNDADRVKKPEWLIMLGICTHLGCVPIGEAGDFGGWFCPCHGSHYDISGRIRKGPAPLNLEIPEYDFTDDETLLVG.

The N-terminal 29 residues, 1–29, are a transit peptide targeting the mitochondrion; it reads MSSLAFRTLRNGLGLKSSVRALSTTTTTL. The Mitochondrial matrix segment spans residues 30 to 47; the sequence is SNYQQPDYSSYLNNKSGQ. Residues 48-77 traverse the membrane as a helical segment; it reads GSRNFTYFMVGSMGLLSAAGAKSTVEAFLS. Over 78–213 the chain is Mitochondrial intermembrane; it reads SFAASADVLA…FTDDETLLVG (136 aa). Residues 116-211 form the Rieske domain; the sequence is RHRTADEIEE…YDFTDDETLL (96 aa). Positions 156, 158, 175, and 178 each coordinate [2Fe-2S] cluster. Cysteines 161 and 177 form a disulfide.

The protein belongs to the Rieske iron-sulfur protein family. Component of the ubiquinol-cytochrome c oxidoreductase (cytochrome b-c1 complex, complex III, CIII), a multisubunit enzyme composed of 10 subunits. The complex is composed of 3 respiratory subunits cytochrome b (COB), cytochrome c1 (CYT1) and Rieske protein (RIP1), 2 core protein subunits COR1 and QCR2, and 5 low-molecular weight protein subunits QCR6, QCR7, QCR8, QCR9 and QCR10. The complex exists as an obligatory dimer and forms supercomplexes (SCs) in the inner mitochondrial membrane with a monomer or a dimer of cytochrome c oxidase (complex IV, CIV), resulting in 2 different assemblies (supercomplexes III(2)IV and III(2)IV(2)). Requires [2Fe-2S] cluster as cofactor.

The protein resides in the mitochondrion inner membrane. The catalysed reaction is a quinol + 2 Fe(III)-[cytochrome c](out) = a quinone + 2 Fe(II)-[cytochrome c](out) + 2 H(+)(out). Component of the ubiquinol-cytochrome c oxidoreductase, a multisubunit transmembrane complex that is part of the mitochondrial electron transport chain which drives oxidative phosphorylation. The complex plays an important role in the uptake of multiple carbon sources present in different host niches. This chain is Cytochrome b-c1 complex subunit Rieske, mitochondrial, found in Candida albicans (strain SC5314 / ATCC MYA-2876) (Yeast).